A 391-amino-acid polypeptide reads, in one-letter code: Formate-dependent phosphoribosylglycinamide formyltransferase (391 aa).

N(1)-(5-phospho-beta-D-ribosyl)glycinamide is bound by residues 18–19 (EL) and glutamate 78. ATP contacts are provided by residues arginine 110, lysine 151, 156-161 (SSGKGQ), 191-194 (EEFI), and glutamate 199. The 191-residue stretch at 115-305 (DLASKDLKIK…EFELHLRAFL (191 aa)) folds into the ATP-grasp domain. Residues glutamate 264 and glutamate 276 each coordinate Mg(2+). N(1)-(5-phospho-beta-D-ribosyl)glycinamide-binding positions include aspartate 283, lysine 353, and 360-361 (RR).

This sequence belongs to the PurK/PurT family. As to quaternary structure, homodimer.

The enzyme catalyses N(1)-(5-phospho-beta-D-ribosyl)glycinamide + formate + ATP = N(2)-formyl-N(1)-(5-phospho-beta-D-ribosyl)glycinamide + ADP + phosphate + H(+). The protein operates within purine metabolism; IMP biosynthesis via de novo pathway; N(2)-formyl-N(1)-(5-phospho-D-ribosyl)glycinamide from N(1)-(5-phospho-D-ribosyl)glycinamide (formate route): step 1/1. Involved in the de novo purine biosynthesis. Catalyzes the transfer of formate to 5-phospho-ribosyl-glycinamide (GAR), producing 5-phospho-ribosyl-N-formylglycinamide (FGAR). Formate is provided by PurU via hydrolysis of 10-formyl-tetrahydrofolate. The sequence is that of Formate-dependent phosphoribosylglycinamide formyltransferase from Prochlorococcus marinus (strain AS9601).